Here is an 83-residue protein sequence, read N- to C-terminus: MKAALLLVISTLMLIGVLTKKSGYPIQHDGCKNWCVFNHFCENICETYGGSGYCYFWKLACWCDNIHNWVPTWSRETNKCRAK.

Positions 1–19 (MKAALLLVISTLMLIGVLT) are cleaved as a signal peptide. Residues 21-81 (KSGYPIQHDG…TWSRETNKCR (61 aa)) form the LCN-type CS-alpha/beta domain. Cystine bridges form between cysteine 31/cysteine 80, cysteine 35/cysteine 54, cysteine 41/cysteine 61, and cysteine 45/cysteine 63. Position 83 (lysine 83) is a propeptide, removed by a carboxypeptidase.

This sequence belongs to the long (4 C-C) scorpion toxin superfamily. Sodium channel inhibitor family. Beta subfamily. In terms of tissue distribution, expressed by the venom gland.

The protein localises to the secreted. Sodium channel inhibitor. Possesses potent toxicity in mice but induces only paralysis in cotton bollworm. The polypeptide is BmKBT-like peptide (Olivierus martensii (Manchurian scorpion)).